Consider the following 80-residue polypeptide: RNA-binding protein Hfq (80 aa).

Positions 10–70 (DAFLNQVRKE…ISTISPLRPV (61 aa)) constitute a Sm domain.

The protein belongs to the Hfq family. As to quaternary structure, homohexamer.

Its function is as follows. RNA chaperone that binds small regulatory RNA (sRNAs) and mRNAs to facilitate mRNA translational regulation in response to envelope stress, environmental stress and changes in metabolite concentrations. Also binds with high specificity to tRNAs. In Desulforamulus reducens (strain ATCC BAA-1160 / DSM 100696 / MI-1) (Desulfotomaculum reducens), this protein is RNA-binding protein Hfq.